A 71-amino-acid polypeptide reads, in one-letter code: UPF0346 protein Bcer98_1690 (71 aa).

Belongs to the UPF0346 family.

The chain is UPF0346 protein Bcer98_1690 from Bacillus cytotoxicus (strain DSM 22905 / CIP 110041 / 391-98 / NVH 391-98).